We begin with the raw amino-acid sequence, 208 residues long: Large ribosomal subunit protein uL4 (208 aa).

Residues 45–85 (RQGTHKAKTRAQVRGGGRKPYRQKGTGNARQGSTRSPLMIG) form a disordered region. Positions 46-66 (QGTHKAKTRAQVRGGGRKPYR) are enriched in basic residues. Residues 69–80 (GTGNARQGSTRS) show a composition bias toward polar residues.

Belongs to the universal ribosomal protein uL4 family. Part of the 50S ribosomal subunit.

Functionally, one of the primary rRNA binding proteins, this protein initially binds near the 5'-end of the 23S rRNA. It is important during the early stages of 50S assembly. It makes multiple contacts with different domains of the 23S rRNA in the assembled 50S subunit and ribosome. In terms of biological role, forms part of the polypeptide exit tunnel. The polypeptide is Large ribosomal subunit protein uL4 (Chlorobium phaeobacteroides (strain DSM 266 / SMG 266 / 2430)).